A 364-amino-acid chain; its full sequence is Alanine racemase (364 aa).

Lysine 39 serves as the catalytic Proton acceptor; specific for D-alanine. Lysine 39 bears the N6-(pyridoxal phosphate)lysine mark. Arginine 137 provides a ligand contact to substrate. Tyrosine 258 serves as the catalytic Proton acceptor; specific for L-alanine. A substrate-binding site is contributed by methionine 306.

This sequence belongs to the alanine racemase family. Pyridoxal 5'-phosphate is required as a cofactor.

It carries out the reaction L-alanine = D-alanine. The protein operates within amino-acid biosynthesis; D-alanine biosynthesis; D-alanine from L-alanine: step 1/1. Functionally, catalyzes the interconversion of L-alanine and D-alanine. May also act on other amino acids. In Methylobacterium sp. (strain 4-46), this protein is Alanine racemase (alr).